Consider the following 264-residue polypeptide: Molybdenum transport system permease protein ModB (264 aa).

The next 6 membrane-spanning stretches (helical) occupy residues 11–31, 57–77, 90–110, 127–147, 176–196, and 234–254; these read VYLPAIAGIVFVAMPLVAIAI, TAAASTVLCVLLGVPMALVLA, LILLPLVLPPVVGGIALLYAF, IAFSTAAVVLAQTFVSLPYLV, WWRVTLPLLLPGVVSGSVLAF, and AAVALSLLLVVVAALVVLGVG. The region spanning 51 to 253 is the ABC transmembrane type-1 domain; that stretch reads LLLSVKTAAA…VVAALVVLGV (203 aa).

Belongs to the binding-protein-dependent transport system permease family. CysTW subfamily.

Its subcellular location is the cell membrane. Its function is as follows. Part of the binding-protein-dependent transport system ModABCD for molybdenum; probably responsible for the translocation of the substrate across the membrane. In Mycobacterium bovis (strain ATCC BAA-935 / AF2122/97), this protein is Molybdenum transport system permease protein ModB (modB).